A 439-amino-acid polypeptide reads, in one-letter code: Ribosomal protein uS12 methylthiotransferase RimO (439 aa).

In terms of domain architecture, MTTase N-terminal spans 5–117 (KKLHLISLGC…IDELIASKQS (113 aa)). 6 residues coordinate [4Fe-4S] cluster: C14, C48, C80, C149, C153, and C156. The Radical SAM core domain occupies 135–363 (TGSNYHAYIK…GEIAERSTLR (229 aa)). The 72-residue stretch at 366–437 (EKMVGKTVEL…GMQLLATLIK (72 aa)) folds into the TRAM domain.

Belongs to the methylthiotransferase family. RimO subfamily. The cofactor is [4Fe-4S] cluster.

The protein localises to the cytoplasm. The enzyme catalyses L-aspartate(89)-[ribosomal protein uS12]-hydrogen + (sulfur carrier)-SH + AH2 + 2 S-adenosyl-L-methionine = 3-methylsulfanyl-L-aspartate(89)-[ribosomal protein uS12]-hydrogen + (sulfur carrier)-H + 5'-deoxyadenosine + L-methionine + A + S-adenosyl-L-homocysteine + 2 H(+). Functionally, catalyzes the methylthiolation of an aspartic acid residue of ribosomal protein uS12. This Sulfurovum sp. (strain NBC37-1) protein is Ribosomal protein uS12 methylthiotransferase RimO.